The chain runs to 340 residues: UPF0324 membrane protein OB3406 (340 aa).

9 consecutive transmembrane segments (helical) span residues 12 to 31, 36 to 58, 94 to 116, 126 to 148, 155 to 177, 215 to 237, 257 to 276, 281 to 303, and 315 to 337; these read SFYT…GVLC, LDIM…TIGL, GLHA…YSLA, SILT…APLV, TAVS…TMMY, IAIV…IGIY, IPWF…IGFL, VNLL…GLNV, and VFFA…IYVM.

The protein belongs to the UPF0324 family.

Its subcellular location is the cell membrane. This Oceanobacillus iheyensis (strain DSM 14371 / CIP 107618 / JCM 11309 / KCTC 3954 / HTE831) protein is UPF0324 membrane protein OB3406.